Reading from the N-terminus, the 183-residue chain is Oligoribonuclease (183 aa).

One can recognise an Exonuclease domain in the interval 8-171; that stretch reads LIWLDMEMTG…ADIRESIAEL (164 aa). Tyr-129 is an active-site residue.

It belongs to the oligoribonuclease family.

It localises to the cytoplasm. Its function is as follows. 3'-to-5' exoribonuclease specific for small oligoribonucleotides. This is Oligoribonuclease from Aromatoleum aromaticum (strain DSM 19018 / LMG 30748 / EbN1) (Azoarcus sp. (strain EbN1)).